Reading from the N-terminus, the 501-residue chain is CaM kinase-like vesicle-associated protein (501 aa).

Residues 24-286 form the Protein kinase domain; the sequence is YDLGQVIKTE…AEEAISHEWI (263 aa). The segment at 327–501 is disordered; the sequence is RAPEQSSTAA…AQESQREEAS (175 aa). The segment covering 331–365 has biased composition (low complexity); sequence QSSTAAAQSASATDTATPGAAGGATAAAASGATSA. A compositionally biased stretch (polar residues) spans 387 to 428; sequence TPATDGSATPATDGSVTPATDGSITPATDGSVTPATDRSATP. T435 is modified (phosphothreonine). The span at 438-451 shows a compositional bias: polar residues; that stretch reads TEESTVPTTQSSAM. Phosphothreonine is present on T459.

This sequence belongs to the protein kinase superfamily. CAMK Ser/Thr protein kinase family. Interacts with calmodulin, in the presence of calcium. Requires Ca(2+) as cofactor.

It localises to the cell membrane. The protein resides in the cytoplasmic vesicle membrane. Does not appear to have detectable kinase activity. This is CaM kinase-like vesicle-associated protein (CAMKV) from Homo sapiens (Human).